A 705-amino-acid chain; its full sequence is Elongation factor G (705 aa).

The tr-type G domain maps to 8-290; that stretch reads EKYRNIGICA…GVVEYLPAPN (283 aa). GTP contacts are provided by residues 17 to 24, 88 to 92, and 142 to 145; these read AHVDAGKT, DTPGH, and NKMD.

The protein belongs to the TRAFAC class translation factor GTPase superfamily. Classic translation factor GTPase family. EF-G/EF-2 subfamily.

It localises to the cytoplasm. Catalyzes the GTP-dependent ribosomal translocation step during translation elongation. During this step, the ribosome changes from the pre-translocational (PRE) to the post-translocational (POST) state as the newly formed A-site-bound peptidyl-tRNA and P-site-bound deacylated tRNA move to the P and E sites, respectively. Catalyzes the coordinated movement of the two tRNA molecules, the mRNA and conformational changes in the ribosome. In Francisella philomiragia subsp. philomiragia (strain ATCC 25017 / CCUG 19701 / FSC 153 / O#319-036), this protein is Elongation factor G.